Consider the following 398-residue polypeptide: MAVADWEEARGRMLLDPTVVNLNTGSGGPLPRSAFERVTGFRAHLAAEPMDFLLREVPALLWQARESLARLIGGDPLRLALATNVTAAVNLVASSLRLEAPGEILLSDDEYTPMRWCWERVARRHGLELRTFRLPELPSDPAEITAAAVAAMGPRTRLFFFSHVVSTTGLILPAAELCEEARARGITTVVDGAHAPGFLDLDLSRIPCDFYAGSGHKWLLAPTGVGFLHLAPGRLEELEPTQVSWAYEPPEGSGPPAARDRFGSTPGLRRLECEGTRDICPWLATPESIDFQAELGPGAIRARRRELTDHARRLLADRPGRTLLTPDSPELSGGMVAYRLPPGTDAAELRRGLWERFRIEAAVAEQPPGPVLRISANFYTTEEEIDRLADALDALTGE.

Lys-217 bears the N6-(pyridoxal phosphate)lysine mark.

Belongs to the class-V pyridoxal-phosphate-dependent aminotransferase family. Requires pyridoxal 5'-phosphate as cofactor.

The enzyme catalyses isopenicillin N = penicillin N. The protein operates within antibiotic biosynthesis; cephalosporin C biosynthesis. Its function is as follows. Catalyzes the reversible isomerization between isopenicillin N and penicillin N. The polypeptide is Isopenicillin N epimerase (cefD) (Streptomyces clavuligerus).